A 285-amino-acid polypeptide reads, in one-letter code: Pantothenate synthetase (285 aa).

Residue 30–37 (MGNLHAGH) participates in ATP binding. His37 acts as the Proton donor in catalysis. Gln61 is a binding site for (R)-pantoate. A beta-alanine-binding site is contributed by Gln61. 149–152 (GEKD) is a binding site for ATP. Position 155 (Gln155) interacts with (R)-pantoate. 186–189 (LSSR) provides a ligand contact to ATP.

It belongs to the pantothenate synthetase family. As to quaternary structure, homodimer.

Its subcellular location is the cytoplasm. The enzyme catalyses (R)-pantoate + beta-alanine + ATP = (R)-pantothenate + AMP + diphosphate + H(+). It functions in the pathway cofactor biosynthesis; (R)-pantothenate biosynthesis; (R)-pantothenate from (R)-pantoate and beta-alanine: step 1/1. Catalyzes the condensation of pantoate with beta-alanine in an ATP-dependent reaction via a pantoyl-adenylate intermediate. This chain is Pantothenate synthetase, found in Ectopseudomonas mendocina (strain ymp) (Pseudomonas mendocina).